Consider the following 319-residue polypeptide: MSAGGEHLKDEGQRYQVVAAGAIAGMVSRFCVAPLDVVKIRLQLQIHSLSDPLSHKNIRGPVYKGTISTLKAIFREEGITGLWKGNIPAELLYIFYGAIQFTTYRTVTQSLHTLPPPYRLPQPAESFVSGATAGGIGTFTTYPFDLLRTRFAAQGNDKIYPSLLTAIRSIHAHEGSRGFFRGVSAAVAQIVPYMGLFFATYESVRVPISSLHLPFGSGDATAGVIASVIAKTGVFPLDLVRKRLQVQGPTRSRYIHQNIPEYNGVLSTMKMVLRDGGVRGLYRGLTVSLIKAAPASAVTMWTYERVLKILKEINQEAIQ.

3 Solcar repeats span residues 12-110, 121-207, and 214-309; these read GQRY…VTQS, PQPA…VRVP, and PFGS…VLKI. 6 helical membrane passes run 17–35, 91–107, 127–147, 182–201, 221–237, and 284–301; these read VVAA…VAPL, LLYI…YRTV, FVSG…FDLL, GVSA…FATY, TAGV…VFPL, and GLTV…VTMW.

Belongs to the mitochondrial carrier (TC 2.A.29) family.

It is found in the mitochondrion inner membrane. In terms of biological role, mitochondrial transporter that mediates uptake of thiamine pyrophosphate (ThPP) into mitochondria. The chain is Mitochondrial thiamine pyrophosphate carrier 1 (TPC1) from Coccidioides immitis (strain RS) (Valley fever fungus).